The following is a 331-amino-acid chain: UPF0194 membrane protein YbhG (331 aa).

Residues M1–A19 form the signal peptide. Residues E107 to A208 are a coiled coil.

Belongs to the UPF0194 family.

The protein localises to the periplasm. The polypeptide is UPF0194 membrane protein YbhG (Salmonella paratyphi A (strain ATCC 9150 / SARB42)).